The primary structure comprises 583 residues: Membrane protein insertase YidC (583 aa).

6 helical membrane passes run serine 5–proline 25, proline 341–tyrosine 361, glycine 362–alanine 382, isoleucine 427–phenylalanine 447, phenylalanine 473–valine 493, and alanine 520–phenylalanine 540.

This sequence belongs to the OXA1/ALB3/YidC family. Type 1 subfamily. In terms of assembly, interacts with the Sec translocase complex via SecD. Specifically interacts with transmembrane segments of nascent integral membrane proteins during membrane integration.

It localises to the cell inner membrane. Required for the insertion and/or proper folding and/or complex formation of integral membrane proteins into the membrane. Involved in integration of membrane proteins that insert both dependently and independently of the Sec translocase complex, as well as at least some lipoproteins. Aids folding of multispanning membrane proteins. This Pelodictyon phaeoclathratiforme (strain DSM 5477 / BU-1) protein is Membrane protein insertase YidC.